A 202-amino-acid chain; its full sequence is NAD(P)H-quinone oxidoreductase chain 6 (202 aa).

Transmembrane regions (helical) follow at residues 9-29 (VVSF…VVLA), 32-52 (IVYS…MYLL), 61-81 (AQVL…IMLV), 98-118 (VLTA…VLAT), and 144-164 (FLLP…GAII).

The protein belongs to the complex I subunit 6 family.

Its subcellular location is the membrane. The enzyme catalyses a plastoquinone + NADH + (n+1) H(+)(in) = a plastoquinol + NAD(+) + n H(+)(out). It carries out the reaction a plastoquinone + NADPH + (n+1) H(+)(in) = a plastoquinol + NADP(+) + n H(+)(out). Its function is as follows. NDH-1 shuttles electrons from NAD(P)H, via FMN and iron-sulfur (Fe-S) centers, to quinones in the respiratory chain. The immediate electron acceptor for the enzyme in this species is believed to be plastoquinone. Couples the redox reaction to proton translocation (for every two electrons transferred, four hydrogen ions are translocated across the cytoplasmic membrane), and thus conserves the redox energy in a proton gradient. This Nostoc sp. (strain PCC 7120 / SAG 25.82 / UTEX 2576) protein is NAD(P)H-quinone oxidoreductase chain 6 (ndhG).